Here is a 326-residue protein sequence, read N- to C-terminus: Protease HtpX homolog (326 aa).

2 consecutive transmembrane segments (helical) span residues 10–30 (LNMA…ALAV) and 41–61 (VGLM…QWLF). H147 is a binding site for Zn(2+). Residue E148 is part of the active site. H151 contributes to the Zn(2+) binding site. 2 helical membrane passes run 159 to 179 (LLMA…WIFW) and 197 to 217 (LLFL…LLVL). E224 contributes to the Zn(2+) binding site.

The protein belongs to the peptidase M48B family. Zn(2+) serves as cofactor.

The protein localises to the cell membrane. This is Protease HtpX homolog from Saccharolobus islandicus (strain Y.N.15.51 / Yellowstone #2) (Sulfolobus islandicus).